A 441-amino-acid polypeptide reads, in one-letter code: tRNA modification GTPase MnmE (441 aa).

3 residues coordinate (6S)-5-formyl-5,6,7,8-tetrahydrofolate: Arg-21, Glu-78, and Lys-117. Residues 211-363 (GIVMTIVGKP…LENKIVSKVK (153 aa)) form the TrmE-type G domain. K(+) is bound at residue Asn-221. GTP is bound by residues 221–226 (NSGKST), 240–246 (TDIPGTT), and 265–268 (DTAG). Ser-225 contacts Mg(2+). 3 residues coordinate K(+): Thr-240, Ile-242, and Thr-245. Residue Thr-246 participates in Mg(2+) binding. Lys-441 contacts (6S)-5-formyl-5,6,7,8-tetrahydrofolate.

This sequence belongs to the TRAFAC class TrmE-Era-EngA-EngB-Septin-like GTPase superfamily. TrmE GTPase family. In terms of assembly, homodimer. Heterotetramer of two MnmE and two MnmG subunits. The cofactor is K(+).

The protein resides in the cytoplasm. Exhibits a very high intrinsic GTPase hydrolysis rate. Involved in the addition of a carboxymethylaminomethyl (cmnm) group at the wobble position (U34) of certain tRNAs, forming tRNA-cmnm(5)s(2)U34. The polypeptide is tRNA modification GTPase MnmE (Thermosipho melanesiensis (strain DSM 12029 / CIP 104789 / BI429)).